The sequence spans 452 residues: Pup--protein ligase (452 aa).

Glu9 is a Mg(2+) binding site. Arg53 contributes to the ATP binding site. Residue Tyr55 coordinates Mg(2+). Catalysis depends on Asp57, which acts as the Proton acceptor. Glu63 is a Mg(2+) binding site. Positions 66 and 419 each coordinate ATP.

It belongs to the Pup ligase/Pup deamidase family. Pup-conjugating enzyme subfamily.

It carries out the reaction ATP + [prokaryotic ubiquitin-like protein]-L-glutamate + [protein]-L-lysine = ADP + phosphate + N(6)-([prokaryotic ubiquitin-like protein]-gamma-L-glutamyl)-[protein]-L-lysine.. The protein operates within protein degradation; proteasomal Pup-dependent pathway. Its pathway is protein modification; protein pupylation. Functionally, catalyzes the covalent attachment of the prokaryotic ubiquitin-like protein modifier Pup to the proteasomal substrate proteins, thereby targeting them for proteasomal degradation. This tagging system is termed pupylation. The ligation reaction involves the side-chain carboxylate of the C-terminal glutamate of Pup and the side-chain amino group of a substrate lysine. This chain is Pup--protein ligase, found in Salinispora tropica (strain ATCC BAA-916 / DSM 44818 / JCM 13857 / NBRC 105044 / CNB-440).